The sequence spans 1218 residues: Formin-A (1218 aa).

Residues 1-108 enclose the C2 domain; it reads MADKLYQIKL…ILGEACNYSV (108 aa). The GBD/FH3 domain maps to 139 to 539; sequence EEKKRHDEIQ…QISLRDKNIG (401 aa). Positions 563–638 form a coiled coil; the sequence is LKSQIESLKK…QLKLTQGTAK (76 aa). The interval 634–762 is disordered; the sequence is QGTAKPDSAA…KAAAPPRKEV (129 aa). The span at 649-747 shows a compositional bias: pro residues; that stretch reads APPPPPPPMT…FGKGPPPPPG (99 aa). An FH1 domain is found at 652–737; the sequence is PPPPPMTGGG…AGGPPPPPPP (86 aa). An FH2 domain is found at 759–1155; it reads RKEVPVPALK…IAKREAAKKL (397 aa). The stretch at 1034 to 1061 forms a coiled coil; sequence SLSQVQAEVATLRKEFVQVQKSIETLNS. Disordered regions lie at residues 1153–1179 and 1198–1218; these read KKLK…TVEV and KNRR…PIDL. Positions 1174–1209 constitute a DAD domain; the sequence is GETVEVKESVVDDLLDTIASGDAFKNRRRRARKTDQ.

This sequence belongs to the formin homology family. Diaphanous subfamily. In terms of assembly, interacts (via GBD/FH3 domain) with activated Rho-GTPases.

Functionally, formins play an important role in the nucleation of actin and the formation of linear actin filaments. The chain is Formin-A (forA) from Dictyostelium discoideum (Social amoeba).